The sequence spans 669 residues: DNA mismatch repair protein MutL (669 aa).

The interval 357–379 (EQRQNTENNQEKTFSSEESNSKS) is disordered. Over residues 361–379 (NTENNQEKTFSSEESNSKS) the composition is skewed to polar residues.

This sequence belongs to the DNA mismatch repair MutL/HexB family.

In terms of biological role, this protein is involved in the repair of mismatches in DNA. It is required for dam-dependent methyl-directed DNA mismatch repair. May act as a 'molecular matchmaker', a protein that promotes the formation of a stable complex between two or more DNA-binding proteins in an ATP-dependent manner without itself being part of a final effector complex. The polypeptide is DNA mismatch repair protein MutL (Staphylococcus aureus (strain Mu3 / ATCC 700698)).